A 294-amino-acid chain; its full sequence is NAD kinase (294 aa).

Residue D74 is the Proton acceptor of the active site. Residues 74–75 (DG), R79, 149–150 (NE), D179, 190–195 (TGYSLS), and A214 contribute to the NAD(+) site.

It belongs to the NAD kinase family. Requires a divalent metal cation as cofactor.

It localises to the cytoplasm. The catalysed reaction is NAD(+) + ATP = ADP + NADP(+) + H(+). In terms of biological role, involved in the regulation of the intracellular balance of NAD and NADP, and is a key enzyme in the biosynthesis of NADP. Catalyzes specifically the phosphorylation on 2'-hydroxyl of the adenosine moiety of NAD to yield NADP. This Flavobacterium johnsoniae (strain ATCC 17061 / DSM 2064 / JCM 8514 / BCRC 14874 / CCUG 350202 / NBRC 14942 / NCIMB 11054 / UW101) (Cytophaga johnsonae) protein is NAD kinase.